Consider the following 153-residue polypeptide: UPF0178 protein Sfum_1097 (153 aa).

Belongs to the UPF0178 family.

This Syntrophobacter fumaroxidans (strain DSM 10017 / MPOB) protein is UPF0178 protein Sfum_1097.